A 278-amino-acid chain; its full sequence is 4-deoxy-L-threo-5-hexosulose-uronate ketol-isomerase (278 aa).

4 residues coordinate Zn(2+): His-196, His-198, Glu-203, and His-245.

Belongs to the KduI family. Zn(2+) serves as cofactor.

The enzyme catalyses 5-dehydro-4-deoxy-D-glucuronate = 3-deoxy-D-glycero-2,5-hexodiulosonate. The protein operates within glycan metabolism; pectin degradation; 2-dehydro-3-deoxy-D-gluconate from pectin: step 4/5. Functionally, catalyzes the isomerization of 5-dehydro-4-deoxy-D-glucuronate to 3-deoxy-D-glycero-2,5-hexodiulosonate. The chain is 4-deoxy-L-threo-5-hexosulose-uronate ketol-isomerase from Shigella flexneri serotype 5b (strain 8401).